Consider the following 565-residue polypeptide: Probable alpha-L-arabinofuranosidase A (565 aa).

The N-terminal stretch at 1–19 (MPLSAAIKSSLSVSVRADA) is a signal peptide. Residues asparagine 71, asparagine 91, asparagine 128, asparagine 303, asparagine 362, asparagine 486, and asparagine 501 are each glycosylated (N-linked (GlcNAc...) asparagine).

Belongs to the glycosyl hydrolase 51 family.

The protein localises to the secreted. It carries out the reaction Hydrolysis of terminal non-reducing alpha-L-arabinofuranoside residues in alpha-L-arabinosides.. It participates in glycan metabolism; L-arabinan degradation. Functionally, alpha-L-arabinofuranosidase involved in the degradation of arabinoxylan, a major component of plant hemicellulose. Acts only on small linear 1,5-alpha-linked L-arabinofuranosyl oligosaccharides. The protein is Probable alpha-L-arabinofuranosidase A (abfA) of Emericella nidulans (strain FGSC A4 / ATCC 38163 / CBS 112.46 / NRRL 194 / M139) (Aspergillus nidulans).